The sequence spans 87 residues: Cytochrome c oxidase assembly factor 3, mitochondrial (87 aa).

Residues 47–69 traverse the membrane as a helical segment; sequence NNLLTAGALGVSVLAIYGYSIFS.

The protein belongs to the COA3 family.

The protein localises to the mitochondrion membrane. Plays a critical role in the biogenesis and activity of cytochrome c oxidase (COX) (complex IV). This chain is Cytochrome c oxidase assembly factor 3, mitochondrial (Ccdc56), found in Drosophila melanogaster (Fruit fly).